The chain runs to 429 residues: MIELDINASDKSLSHRAVIFSLLAKKPCFVRNFLMGGDCLSSLEIAQNLGARVENIAKNSFKITPPWALKEPRKILNCNNSGTSMRLYSGLLSAQKGLFVLSGDNSLNSRPMKRIIEPLKAFGTKILGREDNHFAPLVILGSPLKACDYESPIASAQVKSAFILSALQAQGTSTYRESELSRNHTEIMLKSLGANIKDQDGVLKISPLEKPLEAFDFKIANDPSSAFFFALACAILPKSRLLLKNVLLNPTRIEAFEVLKKMGTHIECVIKSKDLEIIGDIYIEHALLKAITIDQNIASLIDEIPALGIAMLFAKGKSVVKNAKDLRSKESDRIKALISNLKALGIECEEFEDGFYIEGLEDISQLKQRFSQIKPPIIKSFNDHRIAMSFAILTLMLPLEIDNLECANISFPQFKRLLNLFKKGSLHGN.

Positions 11, 12, and 16 each coordinate 3-phosphoshikimate. A phosphoenolpyruvate-binding site is contributed by K11. Phosphoenolpyruvate is bound by residues G82 and R110. Residues S155, Q157, D302, and K329 each coordinate 3-phosphoshikimate. Q157 provides a ligand contact to phosphoenolpyruvate. D302 functions as the Proton acceptor in the catalytic mechanism. The phosphoenolpyruvate site is built by R333 and R385.

This sequence belongs to the EPSP synthase family. As to quaternary structure, monomer.

The protein localises to the cytoplasm. It carries out the reaction 3-phosphoshikimate + phosphoenolpyruvate = 5-O-(1-carboxyvinyl)-3-phosphoshikimate + phosphate. It participates in metabolic intermediate biosynthesis; chorismate biosynthesis; chorismate from D-erythrose 4-phosphate and phosphoenolpyruvate: step 6/7. Catalyzes the transfer of the enolpyruvyl moiety of phosphoenolpyruvate (PEP) to the 5-hydroxyl of shikimate-3-phosphate (S3P) to produce enolpyruvyl shikimate-3-phosphate and inorganic phosphate. This Helicobacter acinonychis (strain Sheeba) protein is 3-phosphoshikimate 1-carboxyvinyltransferase.